Here is a 146-residue protein sequence, read N- to C-terminus: Hemoglobin subunit beta (146 aa).

N-acetylvaline is present on Val1. One can recognise a Globin domain in the interval 2–146 (ELTAEEKAAV…VANALAHKYH (145 aa)). The residue at position 44 (Ser44) is a Phosphoserine. Lys59 bears the N6-acetyllysine mark. Residue His63 coordinates heme b. Lys82 carries the post-translational modification N6-acetyllysine. His92 is a heme b binding site. The residue at position 93 (Cys93) is an S-nitrosocysteine. Lys144 bears the N6-acetyllysine mark.

Belongs to the globin family. In terms of assembly, heterotetramer of two alpha chains and two beta chains. As to expression, red blood cells.

In terms of biological role, involved in oxygen transport from the lung to the various peripheral tissues. The chain is Hemoglobin subunit beta (HBB) from Ceratotherium simum (White rhinoceros).